Reading from the N-terminus, the 372-residue chain is Caytaxin (372 aa).

The disordered stretch occupies residues 1–58 (MGTTEATLRMENVDVRDEWQDEDLPRPLPEDTGVERLGGAVEDSSSPPSTLNLSGAHR). Residues 11–29 (ENVDVRDEWQDEDLPRPLP) show a composition bias toward basic and acidic residues. The span at 43–53 (DSSSPPSTLNL) shows a compositional bias: polar residues. The residue at position 54 (Ser54) is a Phosphoserine. Residues 115 to 120 (ELEWED) form a required for interaction with KLC1 region. Residues 171-328 (IRPYMKVVTH…CVLQYEEQRL (158 aa)) enclose the CRAL-TRIO domain. Residues 190-372 (AIIVFAACFL…ATEDQETSMS (183 aa)) are mediates interaction with GLS. The disordered stretch occupies residues 329–372 (RAKRESTRPPQPEFLLPRSEEKPETVEEEDRAAEATEDQETSMS). Residues 354–372 (VEEEDRAAEATEDQETSMS) are compositionally biased toward acidic residues.

As to quaternary structure, interacts with KLC1; may link mitochondria to KLC1 and regulate mitochondria localization into neuron projections. Interacts with GLS; the interaction is direct and may control GLS localization, negatively regulating its activity. Interacts with PIN1 (via WW domain); upon NGF stimulation. The interaction with PIN1 and GLS is competitive. In terms of processing, cleaved by CASP3 and CASP7. The potential C-terminal product released by CASP3 cleavage may inhibit the ERK signaling pathway through MAP2K2. May be ubiquitinated by STUB1. Neuronal tissues specific. Strongly expressed in brain. Expressed in virtually all parts of the adult brain, including cortex, cerebellum and olfactory bulbs. Enriched in hippocampus, cerebellar cortex, deep cerebellar nuclei, and pontine nuclei (at protein level).

The protein localises to the cell projection. It localises to the axon. The protein resides in the dendrite. It is found in the presynapse. Its subcellular location is the mitochondrion. The protein localises to the growth cone. It localises to the cytoplasm. In terms of biological role, functions in the development of neural tissues, particularly the postnatal maturation of the cerebellar cortex. May play a role in neurotransmission through regulation of glutaminase/GLS, an enzyme responsible for the production in neurons of the glutamate neurotransmitter. Alternatively, may regulate the localization of mitochondria within axons and dendrites. In Mus musculus (Mouse), this protein is Caytaxin (Atcay).